The sequence spans 409 residues: MADAPTYIRQSTTGTATTAPTTMPVHPDTTYYKTTTTTVSDAPRAIADVNDDNHDNYDETTGLRSGEKKTRPLVTSTTAPIDAGRMTLGQKISRWTRIGSDLAREALAEFLGSFILIVFGNGVVAQVVLSRGAHGNFLSINIGYGLAVAFGVYIAGGISGGHLNPAVSLAFAALGKLPWRKLPVYMFAQYAGCICASAIVHAIYYDALNNYDGGNRTRGDTWQSTAGIHASYPQEFLYWQTGLADQIFATSFLMIGILALTDNRNTGPPGGVVPILVGCLVMAIGLAYGFNCGYPINPARDMGPRLFTLMAGWGSRTFSNYNPYIFNDYYQRIPYWFWIPVVGPHLGALLGAAIYFFFIGNHWPTLHRNVLELQVGHRDNSDDIELLAAKSRRPIEVVTTTETTRERRT.

Disordered stretches follow at residues 1-24 and 47-74; these read MADA…TTMP and ADVN…RPLV. Positions 12–22 are enriched in low complexity; the sequence is TTGTATTAPTT. A run of 2 helical transmembrane segments spans residues 110-130 and 138-158; these read FLGS…VVLS and LSIN…AGGI. Positions 164–166 match the NPA 1 motif; the sequence is NPA. Residues 184-204 form a helical membrane-spanning segment; it reads VYMFAQYAGCICASAIVHAIY. N-linked (GlcNAc...) asparagine glycosylation occurs at asparagine 215. The next 2 membrane-spanning stretches (helical) occupy residues 241 to 261 and 270 to 290; these read TGLA…LALT and GGVV…AYGF. Positions 297–299 match the NPA 2 motif; it reads NPA. A helical transmembrane segment spans residues 339–359; it reads IPVVGPHLGALLGAAIYFFFI.

The protein belongs to the MIP/aquaporin (TC 1.A.8) family.

The protein localises to the cell membrane. In terms of biological role, aquaglyceroporin that may modulate the water content and osmolytes during anhydrobiosis. The polypeptide is Aquaporin-10 (Milnesium tardigradum (Water bear)).